The following is a 633-amino-acid chain: Putative ankyrin repeat protein L774 (633 aa).

ANK repeat units lie at residues 91–120 (IYGH…EYDP), 123–152 (NCDD…FFKI), 221–250 (NVNK…EYDF), 252–275 (TILK…ILDS), 338–367 (DYDV…DVNN), 369–393 (MTYA…TLST), and 517–546 (DNLK…NSND).

The chain is Putative ankyrin repeat protein L774 from Acanthamoeba polyphaga mimivirus (APMV).